Here is a 431-residue protein sequence, read N- to C-terminus: 3-phosphoshikimate 1-carboxyvinyltransferase (431 aa).

K26, S27, and R31 together coordinate 3-phosphoshikimate. K26 contributes to the phosphoenolpyruvate binding site. The phosphoenolpyruvate site is built by G99 and R127. 3-phosphoshikimate-binding residues include S170, S171, Q172, S199, E314, and H343. Residue Q172 participates in phosphoenolpyruvate binding. E314 functions as the Proton acceptor in the catalytic mechanism. R347, R388, and K413 together coordinate phosphoenolpyruvate.

It belongs to the EPSP synthase family. In terms of assembly, monomer.

It is found in the cytoplasm. It carries out the reaction 3-phosphoshikimate + phosphoenolpyruvate = 5-O-(1-carboxyvinyl)-3-phosphoshikimate + phosphate. Its pathway is metabolic intermediate biosynthesis; chorismate biosynthesis; chorismate from D-erythrose 4-phosphate and phosphoenolpyruvate: step 6/7. Functionally, catalyzes the transfer of the enolpyruvyl moiety of phosphoenolpyruvate (PEP) to the 5-hydroxyl of shikimate-3-phosphate (S3P) to produce enolpyruvyl shikimate-3-phosphate and inorganic phosphate. This is 3-phosphoshikimate 1-carboxyvinyltransferase from Mycobacterium marinum (strain ATCC BAA-535 / M).